The primary structure comprises 715 residues: ATP-dependent zinc metalloprotease YME1L1 (715 aa).

The Mitochondrial matrix portion of the chain corresponds to methionine 1–leucine 237. Positions asparagine 34–serine 54 are disordered. Residues glutamine 41–proline 52 are compositionally biased toward basic and acidic residues. A helical membrane pass occupies residues isoleucine 238 to valine 258. Residues arginine 259–arginine 715 lie on the Mitochondrial intermembrane side of the membrane. ATP-binding residues include valine 283, threonine 325, glycine 326, lysine 327, threonine 328, and leucine 329. Histidine 541 is a binding site for Zn(2+). Residue glutamate 542 is part of the active site. The Zn(2+) site is built by histidine 545 and aspartate 619.

It in the N-terminal section; belongs to the AAA ATPase family. The protein in the C-terminal section; belongs to the peptidase M41 family. As to quaternary structure, homohexamer; may also form heterohexamers. Exists in several complexes of 600-1100 kDa. Interacts with AFG1L. The cofactor is Zn(2+). Proteolytically processed by mitochondrial processing peptidase (MPP) to generate the mature form. Degraded in an OMA1-dependent manner in response to oxidative stress. In terms of tissue distribution, detected in heart and skeletal muscle (at protein level).

Its subcellular location is the mitochondrion inner membrane. The protein localises to the mitochondrion. The enzyme catalyses ATP + H2O = ADP + phosphate + H(+). Its function is as follows. ATP-dependent metalloprotease that catalyzes the degradation of folded and unfolded proteins with a suitable degron sequence in the mitochondrial intermembrane region. Plays an important role in regulating mitochondrial morphology and function by cleaving OPA1 at position S2, giving rise to a form of OPA1 that promotes maintenance of normal mitochondrial structure and mitochondrial protein metabolism. Ensures cell proliferation, maintains normal cristae morphology and complex I respiration activity, promotes antiapoptotic activity and protects mitochondria from the accumulation of oxidatively damaged membrane proteins. Required to control the accumulation of nonassembled respiratory chain subunits (NDUFB6, OX4 and ND1). Involved in the mitochondrial adaptation in response to various signals, such as stress or developmental cues, by mediating degradation of mitochondrial proteins to rewire the mitochondrial proteome. Catalyzes degradation of mitochondrial proteins, such as translocases, lipid transfer proteins and metabolic enzymes in response to nutrient starvation in order to limit mitochondrial biogenesis: mechanistically, YME1L is activated by decreased phosphatidylethanolamine levels caused by LPIN1 activity in response to mTORC1 inhibition. Acts as a regulator of adult neural stem cell self-renewal by promoting mitochondrial proteome rewiring, preserving neural stem and progenitor cells self-renewal. Required for normal, constitutive degradation of PRELID1. Catalyzes the degradation of OMA1 in response to membrane depolarization. Mediates degradation of TIMM17A downstream of the integrated stress response (ISR). Catalyzes degradation of MICU1 when MICU1 is not assembled via an interchain disulfide. The polypeptide is ATP-dependent zinc metalloprotease YME1L1 (Yme1l1) (Mus musculus (Mouse)).